A 169-amino-acid chain; its full sequence is Ribosome maturation factor RimM (169 aa).

A PRC barrel domain is found at Pro97–Phe169.

This sequence belongs to the RimM family. In terms of assembly, binds ribosomal protein uS19.

It localises to the cytoplasm. Its function is as follows. An accessory protein needed during the final step in the assembly of 30S ribosomal subunit, possibly for assembly of the head region. Essential for efficient processing of 16S rRNA. May be needed both before and after RbfA during the maturation of 16S rRNA. It has affinity for free ribosomal 30S subunits but not for 70S ribosomes. The protein is Ribosome maturation factor RimM of Legionella pneumophila (strain Paris).